Consider the following 465-residue polypeptide: MNFTSFSITQGSRPQPPSTRGFSGNSFKSDLIPQSRRSHSVYGTPGSIRISSPSVPSAIVSSYSSTLSSALPSSSYGGNSFSSSTSFSSGGSDLLLGTSGKEAMQNLNDRLASYLEKVRSLEERNRELEQKIREWYEKQGAGTKTKDFSHYFKIIADLQKQIHDGNMENAKILLRIDNAKLAADDFKQKWEAEQVMRLNVEGDINGLRRILDEMTLARADLEMQIDGQKEELAYLNKSHDEEMKALRSQLGGQVNVEVDAAPAEDLTKKLERMRQQYEQLAEKNRKDAEDWFMKASEDLNKNVASSTEAIQTTKTEINELKRTIQGLQIELQSQLSMKDALEGQLADTEHRYSSILMNLQNIIHQKEAELSDIRADTERQANEYKILFDAKTKLENEIRTYRILLEGDEGKFQTSPHHPSIVTKQTETVVTPVVITNVKTVVEEIIDGKIVSKKEYPGPPEKLMI.

Residues 1 to 28 are compositionally biased toward polar residues; that stretch reads MNFTSFSITQGSRPQPPSTRGFSGNSFK. The segment at 1–47 is disordered; sequence MNFTSFSITQGSRPQPPSTRGFSGNSFKSDLIPQSRRSHSVYGTPGS. Residues 1–98 are head; sequence MNFTSFSITQ…SGGSDLLLGT (98 aa). Residues 99–135 form a coil 1A region; that stretch reads SGKEAMQNLNDRLASYLEKVRSLEERNRELEQKIREW. One can recognise an IF rod domain in the interval 100–412; sequence GKEAMQNLND…ILLEGDEGKF (313 aa). Positions 136–154 are linker 1; that stretch reads YEKQGAGTKTKDFSHYFKI. The interval 155-246 is coil 1B; that stretch reads IADLQKQIHD…KSHDEEMKAL (92 aa). A linker 12 region spans residues 247-269; that stretch reads RSQLGGQVNVEVDAAPAEDLTKK. The coil 2 stretch occupies residues 270-408; that stretch reads LERMRQQYEQ…RTYRILLEGD (139 aa). The segment at 409–465 is tail; that stretch reads EGKFQTSPHHPSIVTKQTETVVTPVVITNVKTVVEEIIDGKIVSKKEYPGPPEKLMI.

Belongs to the intermediate filament family. As to quaternary structure, heterotetramer of two type I and two type II keratins. Expressed in skin.

In terms of biological role, type 1 keratin. May maintain oral mucosal cell homeostasis and tissue organization in response to mechanical stress. In Protopterus aethiopicus (Marbled lungfish), this protein is Keratin, type I cytoskeletal 13 (KRT13).